We begin with the raw amino-acid sequence, 319 residues long: Alpha-hemolysin (319 aa).

The first 26 residues, 1–26 (MKTRIVSSVTTTLLLGSILMNPVAGA), serve as a signal peptide directing secretion.

It belongs to the aerolysin family. In terms of assembly, self-assembles to first form a non-lytic oligomeric intermediate, and then, a mushroom-shaped homoheptamer structure of 100 Angstroms in length and up to 100 Angstroms in diameter. Interacts with human ADAM10; this interaction is required for toxin pore formation, disruption of focal adhesions, and hly-mediated cytotoxicity.

It is found in the secreted. Its function is as follows. Alpha-toxin binds to the membrane of eukaryotic cells (particularly red blood cells, RBC) forming pores, resulting in hemolysis, with the release of low-molecular weight molecules leading to eventual osmotic RBC lysis. Human RBCs bind much less alpha-toxin than do rabbit RBCs. Heptamer oligomerization and pore formation is required for lytic activity. This Staphylococcus aureus protein is Alpha-hemolysin (hly).